We begin with the raw amino-acid sequence, 100 residues long: Large ribosomal subunit protein bL21 (100 aa).

The protein belongs to the bacterial ribosomal protein bL21 family. As to quaternary structure, part of the 50S ribosomal subunit. Contacts proteins L15 and L20.

Functionally, binds directly to 23S rRNA, probably serving to organize its structure. This Deinococcus radiodurans (strain ATCC 13939 / DSM 20539 / JCM 16871 / CCUG 27074 / LMG 4051 / NBRC 15346 / NCIMB 9279 / VKM B-1422 / R1) protein is Large ribosomal subunit protein bL21.